The sequence spans 571 residues: Urease subunit alpha (571 aa).

Residues 134-571 (GAIDTHIHFI…LPMAQRYFLF (438 aa)) enclose the Urease domain. Residues histidine 139, histidine 141, and lysine 222 each contribute to the Ni(2+) site. Lysine 222 is subject to N6-carboxylysine. Histidine 224 is a binding site for substrate. Residues histidine 251 and histidine 277 each contribute to the Ni(2+) site. The Proton donor role is filled by histidine 325. Position 365 (aspartate 365) interacts with Ni(2+).

Belongs to the metallo-dependent hydrolases superfamily. Urease alpha subunit family. As to quaternary structure, heterotrimer of UreA (gamma), UreB (beta) and UreC (alpha) subunits. Three heterotrimers associate to form the active enzyme. Ni cation is required as a cofactor. Post-translationally, carboxylation allows a single lysine to coordinate two nickel ions.

It is found in the cytoplasm. The enzyme catalyses urea + 2 H2O + H(+) = hydrogencarbonate + 2 NH4(+). The protein operates within nitrogen metabolism; urea degradation; CO(2) and NH(3) from urea (urease route): step 1/1. This Bordetella bronchiseptica (strain ATCC BAA-588 / NCTC 13252 / RB50) (Alcaligenes bronchisepticus) protein is Urease subunit alpha.